The sequence spans 469 residues: Mitochondrial adenyl nucleotide antiporter SLC25A25 (469 aa).

Residues 1–165 (MLCLCLYVPI…LYWKHSTIFD (165 aa)) form a regulatory N-terminal domain region. The Mitochondrial intermembrane segment spans residues 1–189 (MLCLCLYVPI…ERQTGMWWRH (189 aa)). EF-hand domains are found at residues 47-80 (TYRQ…QDHE), 78-113 (DHEK…LGVK), and 114-149 (ISEQ…HPVE). Asp60, Asp62, Asp64, Gln66, and Glu71 together coordinate Ca(2+). The linker region stretch occupies residues 151–160 (IPEIILYWKH). The C-terminal transmembrane transporter domain stretch occupies residues 166 to 469 (VGENLTVPDE…LKITLGVQSR (304 aa)). 3 Solcar repeats span residues 184–270 (GMWW…MKRL), 278–363 (LRIH…LKNT), and 375–463 (PGVF…LKIT). A helical membrane pass occupies residues 190–207 (LVAGGGAGAVSRTCTAPL). Topologically, residues 208-244 (DRLKVLMQVHASRSNNMCIIGGFTQMIREGGAKSLWR) are mitochondrial matrix. The chain crosses the membrane as a helical span at residues 245-264 (GNGINVLKIAPESAIKFMAY). Topologically, residues 265 to 287 (EQMKRLVGSDQETLRIHERLVAG) are mitochondrial intermembrane. The helical transmembrane segment at 288–301 (SLAGAIAQSSIYPM) threads the bilayer. Residues 302-337 (EVLKTRMALRKTGQYSGMLDCAKRILAKEGVAAFYK) lie on the Mitochondrial matrix side of the membrane. Residues 338–357 (GYIPNMLGIIPYAGIDLAVY) traverse the membrane as a helical segment. Topologically, residues 358-380 (ETLKNTWLQRYAVNSADPGVFVL) are mitochondrial intermembrane. The chain crosses the membrane as a helical span at residues 381-398 (LACGTISSTCGQLASYPL). At 399–437 (ALVRTRMQAQASIEGAPEVTMSSLFKQILRTEGAFGLYR) the chain is on the mitochondrial matrix side. A helical transmembrane segment spans residues 438-457 (GLAPNFMKVIPAVSISYVVY). Residues 458–469 (ENLKITLGVQSR) lie on the Mitochondrial intermembrane side of the membrane.

This sequence belongs to the mitochondrial carrier (TC 2.A.29) family. As to expression, mainly present in the liver and the skeletal muscle (at protein level).

Its subcellular location is the mitochondrion inner membrane. It catalyses the reaction Mg(2+)(out) + phosphate(in) + ATP(out) = Mg(2+)(in) + phosphate(out) + ATP(in). Its activity is regulated as follows. Activated by an increase in cytosolic calcium levels that induce a conformational change of the N-terminal regulatory domain, uncapping the channel and allowing transport. In terms of biological role, electroneutral antiporter that most probably mediates the transport of adenyl nucleotides through the inner mitochondrial membrane. Originally identified as an ATP-magnesium/inorganic phosphate antiporter, it could have a broader specificity for adenyl nucleotides. By regulating the mitochondrial matrix adenyl nucleotide pool could adapt to changing cellular energetic demands and indirectly regulate adenyl nucleotide-dependent metabolic pathways. The chain is Mitochondrial adenyl nucleotide antiporter SLC25A25 from Rattus norvegicus (Rat).